A 532-amino-acid chain; its full sequence is Beta-hexosaminidase subunit A1 (532 aa).

An N-terminal signal peptide occupies residues 1–18; sequence MIKKIILFFAVLIAIVIG. N-linked (GlcNAc...) asparagine glycans are attached at residues asparagine 72 and asparagine 79. The active-site Proton donor is glutamate 308. Asparagine 350 and asparagine 427 each carry an N-linked (GlcNAc...) asparagine glycan.

The protein belongs to the glycosyl hydrolase 20 family. Dimer. Post-translationally, the N-terminus is blocked. N-glycosylated.

The protein localises to the lysosome. It carries out the reaction Hydrolysis of terminal non-reducing N-acetyl-D-hexosamine residues in N-acetyl-beta-D-hexosaminides.. Functionally, responsible for the degradation of GM2 gangliosides, and a variety of other molecules containing terminal N-acetyl hexosamines. This enzyme plays a role during the slug stage of development in the maintenance of pseudoplasmodia of normal size. This Dictyostelium discoideum (Social amoeba) protein is Beta-hexosaminidase subunit A1 (hexa1).